We begin with the raw amino-acid sequence, 280 residues long: 4-diphosphocytidyl-2-C-methyl-D-erythritol kinase (280 aa).

Residue Lys9 is part of the active site. 93 to 103 (PVAAGLGGGSS) is an ATP binding site. The active site involves Asp135.

This sequence belongs to the GHMP kinase family. IspE subfamily.

The catalysed reaction is 4-CDP-2-C-methyl-D-erythritol + ATP = 4-CDP-2-C-methyl-D-erythritol 2-phosphate + ADP + H(+). It functions in the pathway isoprenoid biosynthesis; isopentenyl diphosphate biosynthesis via DXP pathway; isopentenyl diphosphate from 1-deoxy-D-xylulose 5-phosphate: step 3/6. Its function is as follows. Catalyzes the phosphorylation of the position 2 hydroxy group of 4-diphosphocytidyl-2C-methyl-D-erythritol. In Syntrophotalea carbinolica (strain DSM 2380 / NBRC 103641 / GraBd1) (Pelobacter carbinolicus), this protein is 4-diphosphocytidyl-2-C-methyl-D-erythritol kinase.